Reading from the N-terminus, the 250-residue chain is Adenosylcobinamide-GDP ribazoletransferase (250 aa).

The next 6 helical transmembrane spans lie at 32–52 (KGIIYFPVVGGIIGALLMVAY), 59–79 (LAHSLSALLTVGFFVFLTGGL), 113–133 (GVLAMVFILLLKLYGIQGLGE), 136–156 (IYWGIILMPVMGRQAIVYGCY), 185–205 (LTFILAAMHLPSLIFALLLPI), and 230–250 (CELTEGCYLLFILLITGAGLF).

The protein belongs to the CobS family. Mg(2+) serves as cofactor.

Its subcellular location is the cell membrane. The enzyme catalyses alpha-ribazole + adenosylcob(III)inamide-GDP = adenosylcob(III)alamin + GMP + H(+). It catalyses the reaction alpha-ribazole 5'-phosphate + adenosylcob(III)inamide-GDP = adenosylcob(III)alamin 5'-phosphate + GMP + H(+). Its pathway is cofactor biosynthesis; adenosylcobalamin biosynthesis; adenosylcobalamin from cob(II)yrinate a,c-diamide: step 7/7. Joins adenosylcobinamide-GDP and alpha-ribazole to generate adenosylcobalamin (Ado-cobalamin). Also synthesizes adenosylcobalamin 5'-phosphate from adenosylcobinamide-GDP and alpha-ribazole 5'-phosphate. The protein is Adenosylcobinamide-GDP ribazoletransferase of Alkaliphilus metalliredigens (strain QYMF).